The sequence spans 122 residues: Protein FAM223B (122 aa).

It belongs to the FAM223 family.

The polypeptide is Protein FAM223B (FAM223B) (Homo sapiens (Human)).